Reading from the N-terminus, the 33-residue chain is Cytochrome b6-f complex subunit 8 (33 aa).

A helical transmembrane segment spans residues 2-22 (LFTFAWASLAAIFTFSIAMVV).

The protein belongs to the PetN family. In terms of assembly, the 4 large subunits of the cytochrome b6-f complex are cytochrome b6, subunit IV (17 kDa polypeptide, PetD), cytochrome f and the Rieske protein, while the 4 small subunits are PetG, PetL, PetM and PetN. The complex functions as a dimer.

It is found in the cellular thylakoid membrane. In terms of biological role, component of the cytochrome b6-f complex, which mediates electron transfer between photosystem II (PSII) and photosystem I (PSI), cyclic electron flow around PSI, and state transitions. This is Cytochrome b6-f complex subunit 8 from Prochlorococcus marinus (strain MIT 9211).